A 377-amino-acid chain; its full sequence is Nitric oxide reductase FlRd-NAD(+) reductase (377 aa).

This sequence belongs to the FAD-dependent oxidoreductase family. Requires FAD as cofactor.

Its subcellular location is the cytoplasm. The catalysed reaction is 2 reduced [nitric oxide reductase rubredoxin domain] + NAD(+) + H(+) = 2 oxidized [nitric oxide reductase rubredoxin domain] + NADH. Its pathway is nitrogen metabolism; nitric oxide reduction. One of at least two accessory proteins for anaerobic nitric oxide (NO) reductase. Reduces the rubredoxin moiety of NO reductase. This Escherichia coli O127:H6 (strain E2348/69 / EPEC) protein is Nitric oxide reductase FlRd-NAD(+) reductase.